The following is a 239-amino-acid chain: Putative ABC transporter ATP-binding protein AlbC (239 aa).

The region spanning 4–238 is the ABC transporter domain; it reads LDIHDVSVWY…RREFFEVIGH (235 aa). 37–44 is an ATP binding site; sequence GVNGAGKT.

Belongs to the ABC transporter superfamily.

Functionally, involved in the production of the bacteriocin subtilosin. Required for immunity to subtilosin. In Bacillus subtilis (strain 168), this protein is Putative ABC transporter ATP-binding protein AlbC (albC).